The chain runs to 165 residues: Glutamyl-tRNA(Gln) amidotransferase subunit F, mitochondrial (165 aa).

The segment covering 137-153 (VSDQRGERGFDTSELRT) has biased composition (basic and acidic residues). The segment at 137-165 (VSDQRGERGFDTSELRTRINRAKSTAEKE) is disordered.

It belongs to the GatF family. Subunit of the heterotrimeric GatFAB amidotransferase (AdT) complex, composed of A, B and F subunits.

The protein localises to the mitochondrion inner membrane. The enzyme catalyses L-glutamyl-tRNA(Gln) + L-glutamine + ATP + H2O = L-glutaminyl-tRNA(Gln) + L-glutamate + ADP + phosphate + H(+). Allows the formation of correctly charged Gln-tRNA(Gln) through the transamidation of misacylated Glu-tRNA(Gln) in the mitochondria. The reaction takes place in the presence of glutamine and ATP through an activated gamma-phospho-Glu-tRNA(Gln). Required for proper protein synthesis within the mitochondrion. In Clavispora lusitaniae (strain ATCC 42720) (Yeast), this protein is Glutamyl-tRNA(Gln) amidotransferase subunit F, mitochondrial.